Here is a 105-residue protein sequence, read N- to C-terminus: Large ribosomal subunit protein uL24 (105 aa).

Belongs to the universal ribosomal protein uL24 family. As to quaternary structure, part of the 50S ribosomal subunit.

Its function is as follows. One of two assembly initiator proteins, it binds directly to the 5'-end of the 23S rRNA, where it nucleates assembly of the 50S subunit. Functionally, one of the proteins that surrounds the polypeptide exit tunnel on the outside of the subunit. The polypeptide is Large ribosomal subunit protein uL24 (Sorangium cellulosum (strain So ce56) (Polyangium cellulosum (strain So ce56))).